The sequence spans 411 residues: Glutamate dehydrogenase (411 aa).

Residue lysine 102 is part of the active site.

The protein belongs to the Glu/Leu/Phe/Val dehydrogenases family.

The catalysed reaction is L-glutamate + NAD(+) + H2O = 2-oxoglutarate + NH4(+) + NADH + H(+). It carries out the reaction L-glutamate + NADP(+) + H2O = 2-oxoglutarate + NH4(+) + NADPH + H(+). The polypeptide is Glutamate dehydrogenase (GDH1) (Zea mays (Maize)).